Here is a 489-residue protein sequence, read N- to C-terminus: Probable cytochrome P450 CYP44 (489 aa).

A disordered region spans residues 12 to 31 (VEKCPYSPTSSPNTPPRTFS). Positions 16-29 (PYSPTSSPNTPPRT) are enriched in low complexity. A heme-binding site is contributed by Cys-438.

Belongs to the cytochrome P450 family. Heme serves as cofactor.

Cytochromes P450 are a group of heme-thiolate monooxygenases. They oxidize a variety of structurally unrelated compounds, including steroids, fatty acids, and xenobiotics. The chain is Probable cytochrome P450 CYP44 (cyp-44A1) from Caenorhabditis elegans.